Here is a 250-residue protein sequence, read N- to C-terminus: Probable transcriptional regulatory protein ROP_68700 (250 aa).

This sequence belongs to the TACO1 family.

The protein localises to the cytoplasm. The sequence is that of Probable transcriptional regulatory protein ROP_68700 from Rhodococcus opacus (strain B4).